Reading from the N-terminus, the 331-residue chain is Lipoyl synthase (331 aa).

Residues 1–20 (MTTETNPAVTPAYNPSEKQK) form a disordered region. Cys71, Cys76, Cys82, Cys97, Cys101, Cys104, and Ser311 together coordinate [4Fe-4S] cluster. The Radical SAM core domain occupies 82-300 (CFGKGTATFM…EEEAYKMGFA (219 aa)).

The protein belongs to the radical SAM superfamily. Lipoyl synthase family. [4Fe-4S] cluster serves as cofactor.

It is found in the cytoplasm. It carries out the reaction [[Fe-S] cluster scaffold protein carrying a second [4Fe-4S](2+) cluster] + N(6)-octanoyl-L-lysyl-[protein] + 2 oxidized [2Fe-2S]-[ferredoxin] + 2 S-adenosyl-L-methionine + 4 H(+) = [[Fe-S] cluster scaffold protein] + N(6)-[(R)-dihydrolipoyl]-L-lysyl-[protein] + 4 Fe(3+) + 2 hydrogen sulfide + 2 5'-deoxyadenosine + 2 L-methionine + 2 reduced [2Fe-2S]-[ferredoxin]. The protein operates within protein modification; protein lipoylation via endogenous pathway; protein N(6)-(lipoyl)lysine from octanoyl-[acyl-carrier-protein]: step 2/2. Catalyzes the radical-mediated insertion of two sulfur atoms into the C-6 and C-8 positions of the octanoyl moiety bound to the lipoyl domains of lipoate-dependent enzymes, thereby converting the octanoylated domains into lipoylated derivatives. This chain is Lipoyl synthase, found in Janthinobacterium sp. (strain Marseille) (Minibacterium massiliensis).